Reading from the N-terminus, the 33-residue chain is Brevinin-2CDYb (33 aa).

A disulfide bridge links Cys-27 with Cys-33.

The protein belongs to the frog skin active peptide (FSAP) family. Brevinin subfamily. In terms of tissue distribution, expressed by the skin glands.

The protein localises to the secreted. Functionally, antimicrobial peptide. The protein is Brevinin-2CDYb of Rana dybowskii (Dybovsky's frog).